Consider the following 509-residue polypeptide: L-aspartate oxidase (509 aa).

Residues 14–17 (SGIA), 45–52 (STDWAQGG), and D214 contribute to the FAD site. R279 serves as the catalytic Proton donor/acceptor. Residues E358 and 374-375 (SL) contribute to the FAD site. Disordered regions lie at residues 389 to 412 (AAGD…PDLP) and 486 to 509 (NPES…DAGH). A compositionally biased stretch (basic and acidic residues) spans 402–412 (PELRDRDPDLP). Over residues 499-509 (AAAEEAPDAGH) the composition is skewed to acidic residues.

The protein belongs to the FAD-dependent oxidoreductase 2 family. NadB subfamily. FAD serves as cofactor.

Its subcellular location is the cytoplasm. The enzyme catalyses L-aspartate + O2 = iminosuccinate + H2O2. It participates in cofactor biosynthesis; NAD(+) biosynthesis; iminoaspartate from L-aspartate (oxidase route): step 1/1. In terms of biological role, catalyzes the oxidation of L-aspartate to iminoaspartate, the first step in the de novo biosynthesis of NAD(+). This Halobacterium salinarum (strain ATCC 700922 / JCM 11081 / NRC-1) (Halobacterium halobium) protein is L-aspartate oxidase (nadB).